Reading from the N-terminus, the 209-residue chain is Thiamine-phosphate synthase (209 aa).

4-amino-2-methyl-5-(diphosphooxymethyl)pyrimidine contacts are provided by residues 35 to 39 (QYRDK) and Asn-67. Asp-68 and Asp-86 together coordinate Mg(2+). 4-amino-2-methyl-5-(diphosphooxymethyl)pyrimidine is bound at residue Thr-105. A 2-[(2R,5Z)-2-carboxy-4-methylthiazol-5(2H)-ylidene]ethyl phosphate-binding site is contributed by 132 to 134 (SNT). Position 135 (Lys-135) interacts with 4-amino-2-methyl-5-(diphosphooxymethyl)pyrimidine. 2-[(2R,5Z)-2-carboxy-4-methylthiazol-5(2H)-ylidene]ethyl phosphate is bound at residue Gly-162.

It belongs to the thiamine-phosphate synthase family. Mg(2+) serves as cofactor.

The catalysed reaction is 2-[(2R,5Z)-2-carboxy-4-methylthiazol-5(2H)-ylidene]ethyl phosphate + 4-amino-2-methyl-5-(diphosphooxymethyl)pyrimidine + 2 H(+) = thiamine phosphate + CO2 + diphosphate. The enzyme catalyses 2-(2-carboxy-4-methylthiazol-5-yl)ethyl phosphate + 4-amino-2-methyl-5-(diphosphooxymethyl)pyrimidine + 2 H(+) = thiamine phosphate + CO2 + diphosphate. It catalyses the reaction 4-methyl-5-(2-phosphooxyethyl)-thiazole + 4-amino-2-methyl-5-(diphosphooxymethyl)pyrimidine + H(+) = thiamine phosphate + diphosphate. It functions in the pathway cofactor biosynthesis; thiamine diphosphate biosynthesis; thiamine phosphate from 4-amino-2-methyl-5-diphosphomethylpyrimidine and 4-methyl-5-(2-phosphoethyl)-thiazole: step 1/1. Condenses 4-methyl-5-(beta-hydroxyethyl)thiazole monophosphate (THZ-P) and 2-methyl-4-amino-5-hydroxymethyl pyrimidine pyrophosphate (HMP-PP) to form thiamine monophosphate (TMP). The protein is Thiamine-phosphate synthase of Pseudomonas fluorescens (strain SBW25).